The sequence spans 863 residues: Leucine--tRNA ligase (863 aa).

The short motif at 42-52 is the 'HIGH' region element; that stretch reads PYPSGKIHMGH. The 'KMSKS' region motif lies at 618–622; it reads KMSKS. Residue Lys621 participates in ATP binding.

The protein belongs to the class-I aminoacyl-tRNA synthetase family.

It localises to the cytoplasm. It catalyses the reaction tRNA(Leu) + L-leucine + ATP = L-leucyl-tRNA(Leu) + AMP + diphosphate. This is Leucine--tRNA ligase from Desulforapulum autotrophicum (strain ATCC 43914 / DSM 3382 / VKM B-1955 / HRM2) (Desulfobacterium autotrophicum).